We begin with the raw amino-acid sequence, 188 residues long: Large ribosomal subunit protein eL18 (188 aa).

Positions 147–188 are disordered; the sequence is EAEKHFGPAPGVPHSHTKPYVRSKGRKFERARGRRASRAYKN. 2 stretches are compositionally biased toward basic residues: residues 161 to 171 and 178 to 188; these read SHTKPYVRSKG and RGRRASRAYKN.

This sequence belongs to the eukaryotic ribosomal protein eL18 family.

The protein localises to the cytoplasm. This Caenorhabditis elegans protein is Large ribosomal subunit protein eL18 (rpl-18).